Here is a 1487-residue protein sequence, read N- to C-terminus: Collagen alpha-1(II) chain (1487 aa).

Positions 1 to 25 (MIRLGAPQSLVLLTLLIAAVLRCQG) are cleaved as a signal peptide. A propeptide spans 26–181 (QDAQEAGSCL…PGLSAGNFAA (156 aa)) (N-terminal propeptide). The 58-residue stretch at 32 to 89 (GSCLQNGQRYKDKDVWKPSSCRICVCDTGNVLCDDIICEDPDCLNPEIPFGECCPICP) folds into the VWFC domain. A disordered region spans residues 96 to 179 (SGKLGPKGQK…GPPGLSAGNF (84 aa)). 2 stretches are compositionally biased toward basic and acidic residues: residues 104 to 115 (QKGEPGDIRDII) and 132 to 153 (PRGD…RDGE). Residues 157–172 (PGNPGPAGPPGPPGPP) show a composition bias toward pro residues. Position 190 is a 5-hydroxylysine (lysine 190). Lysine 190 carries O-linked (Gal...) hydroxylysine glycosylation. A disordered region spans residues 191-1237 (AGGAQMGVMQ…QREKGPDPMQ (1047 aa)). The span at 192–203 (GGAQMGVMQGPM) shows a compositional bias: low complexity. The triple-helical region stretch occupies residues 201–1214 (GPMGPMGPRG…PGPPGPPGPP (1014 aa)). A compositionally biased stretch (pro residues) spans 208–217 (PRGPPGPAGA). Low complexity predominate over residues 218 to 239 (PGPQGFQGNPGEPGEPGVSGPM). The segment covering 251–265 (PGDDGEAGKPGKSGE) has biased composition (basic and acidic residues). A 5-hydroxylysine mark is found at lysine 287, lysine 299, and lysine 308. O-linked (Gal...) hydroxylysine glycans are attached at residues lysine 287, lysine 299, and lysine 308. 2 stretches are compositionally biased toward low complexity: residues 310-320 (ESGSPGENGSP) and 335-350 (TGPA…DGQP). A compositionally biased stretch (gly residues) spans 360–369 (GPAGGPGFPG). 2 stretches are compositionally biased toward low complexity: residues 370–382 (APGA…PTGA) and 403–431 (PAGA…AGAP). Position 374 is a 5-hydroxylysine (lysine 374). O-linked (Gal...) hydroxylysine glycosylation is present at lysine 374. The segment covering 433–442 (FPGPRGPPGP) has biased composition (pro residues). Low complexity predominate over residues 472-485 (ETGPAGPQGAPGPA). Lysine 608 and lysine 620 each carry 5-hydroxylysine. Lysine 608 and lysine 620 each carry an O-linked (Gal...) hydroxylysine glycan. Low complexity predominate over residues 622-631 (LAGAPGLRGL). A 4-hydroxyproline mark is found at proline 659 and proline 668. Residue proline 670 is modified to 3-hydroxyproline. 2 positions are modified to 4-hydroxyproline: proline 671 and proline 674. Residues 706-736 (ERGSPGAQGLQGPRGLPGTPGTDGPKGAAGP) are compositionally biased toward low complexity. Residues 764 to 775 (KGDRGDVGEKGP) are compositionally biased toward basic and acidic residues. 2 stretches are compositionally biased toward low complexity: residues 833–848 (AGFA…PGAK) and 877–914 (PTGV…NGNP). Proline 907 is subject to 3-hydroxyproline. A 4-hydroxyproline mark is found at proline 908, proline 914, and proline 920. Low complexity predominate over residues 962 to 980 (DGPSGLDGPPGPQGLAGQR). The span at 1069–1079 (APGPPGSPGPA) shows a compositional bias: pro residues. The span at 1115–1129 (RGDKGESGEQGERGL) shows a compositional bias: basic and acidic residues. 3-hydroxyproline is present on proline 1144. 2 stretches are compositionally biased toward low complexity: residues 1148-1157 (SGDQGASGPA) and 1171-1181 (PSGKDGSNGIP). 4-hydroxyproline is present on proline 1181. Proline 1186 bears the 3-hydroxyproline mark. Residue proline 1187 is modified to 4-hydroxyproline. The segment covering 1199 to 1216 (VGPPGSPGPPGPPGPPGP) has biased composition (pro residues). Proline 1201 is modified (3-hydroxyproline). 4-hydroxyproline is present on residues proline 1202 and proline 1205. Position 1207 is a 3-hydroxyproline (proline 1207). 4-hydroxyproline occurs at positions 1208 and 1211. Proline 1213 carries the 3-hydroxyproline modification. Proline 1214 is modified (4-hydroxyproline). A nonhelical region (C-terminal) region spans residues 1215-1241 (GPGIDMSAFAGLGQREKGPDPMQYMRA). The Fibrillar collagen NC1 domain occupies 1253–1487 (VEVDATLKSL…GVDIGPVCFL (235 aa)). Cystine bridges form between cysteine 1283-cysteine 1315, cysteine 1323-cysteine 1485, and cysteine 1393-cysteine 1438. Residues aspartate 1301, asparagine 1303, glutamine 1304, cysteine 1306, and aspartate 1309 each contribute to the Ca(2+) site.

This sequence belongs to the fibrillar collagen family. In terms of assembly, homotrimers of alpha 1(II) chains. Contains mostly 4-hydroxyproline. Prolines at the third position of the tripeptide repeating unit (G-X-P) are 4-hydroxylated in some or all of the chains. In terms of processing, contains 3-hydroxyproline at a few sites. This modification occurs on the first proline residue in the sequence motif Gly-Pro-Hyp, where Hyp is 4-hydroxyproline. Post-translationally, lysine residues at the third position of the tripeptide repeating unit (G-X-Y) are 5-hydroxylated in some or all of the chains. O-glycosylated on hydroxylated lysine residues. The O-linked glycan consists of a Glc-Gal disaccharide.

Its subcellular location is the secreted. The protein resides in the extracellular space. The protein localises to the extracellular matrix. Functionally, type II collagen is specific for cartilaginous tissues. It is essential for the normal embryonic development of the skeleton, for linear growth and for the ability of cartilage to resist compressive forces. This Mus musculus (Mouse) protein is Collagen alpha-1(II) chain.